The following is a 557-amino-acid chain: MRSDIPETLQNFVSTKTVHQTWAKTFFCKPQAIFQPRTVDEIRELVDQARINGKTIMTVGSGHSPSDMTMTKEWLCNLDRFNQVLKKEEFSGPTRNGEGEEVKFVDLTVQAGCRIYELNRYLKENELAIQNLGSISDQSMAGVISTGTHGSTQYHGLVSQQVVSIEIMNSAGKLITCSSMENTQLFKAAMLSLGKIGIITHVTLRTIPKYTIKSKQEIIKFDTLLKNWDTVWLDSEFIRVWWFPYSGNCVCWRASKSSEPLSKPRDSWYGTWFGRKFYESLLWISVHICPHLTPLIEKFVFKNQYGDVETLGHGDVAVQNSVEGLNMDCLFSQFVNEWSTPLSSGQDVLIKLNDVIQTAREQNRFYVHAPIEVRCSNLTYSEKPFVDENDEPSLYPNKKWLAKRDRLSPGPIPGNNLRPYLDNSSNLRYDGDGANVTNDQLTLFINATMYRPFHTNVNSQEWYQLFEDIMTNASGRPHWAKNFIGVNGAHRTDQDLRKQLEFGGKTSYSMKGFNPILKKWFGENLVEYNKVRESMDPDNVFLSGKDWAVRNGILIDV.

An FAD-binding PCMH-type domain is found at 26 to 209 (FFCKPQAIFQ…THVTLRTIPK (184 aa)). Residue histidine 63 is modified to Pros-8alpha-FAD histidine.

This sequence belongs to the oxygen-dependent FAD-linked oxidoreductase family. It depends on FAD as a cofactor.

Its subcellular location is the mitochondrion membrane. It catalyses the reaction D-arabinono-1,4-lactone + O2 = dehydro-D-arabinono-1,4-lactone + H2O2 + H(+). It functions in the pathway cofactor biosynthesis; D-erythroascorbate biosynthesis; dehydro-D-arabinono-1,4-lactone from D-arabinose: step 2/2. This is D-arabinono-1,4-lactone oxidase (ALO1) from Debaryomyces hansenii (strain ATCC 36239 / CBS 767 / BCRC 21394 / JCM 1990 / NBRC 0083 / IGC 2968) (Yeast).